The primary structure comprises 259 residues: Polycomb group RING finger protein 1 (259 aa).

An RING-type zinc finger spans residues 45–84 (CYLCAGYFIDATTITECLHTFCKSCIVKYLQTSKYCPLCN).

Component of a PRC1-like complex.

The protein resides in the nucleus. In terms of biological role, component of a Polycomb group (PcG) multiprotein PRC1-like complex, a complex class required to maintain the transcriptionally repressive state of many genes, including Hox genes, throughout development. PcG PRC1 complex acts via chromatin remodeling and modification of histones; it mediates monoubiquitination of histone H2A 'Lys-119', rendering chromatin heritably changed in its expressibility. The chain is Polycomb group RING finger protein 1 (pcgf1) from Xenopus tropicalis (Western clawed frog).